The primary structure comprises 738 residues: Flowering time control protein FCA (738 aa).

A disordered region spans residues 1–118 (MHRGGDRSTD…RGDHSDHDNR (118 aa)). Gly residues-rich tracts occupy residues 52–70 (RGGG…GGGR) and 81–98 (SGGG…GEPG). Basic and acidic residues predominate over residues 109–118 (RGDHSDHDNR). RRM domains follow at residues 122–203 (VKLF…YADG) and 213–293 (HKLF…FADP). Disordered regions lie at residues 292 to 451 (DPKR…PAQQ) and 566 to 595 (QQSN…IIPS). The span at 301–311 (SRGGPAFGGPG) shows a compositional bias: gly residues. Polar residues predominate over residues 342-358 (HPSSPRSAPHQFNNFGS). Residues 368-377 (TVTSTTDTAT) are compositionally biased toward low complexity. Over residues 383–401 (FSGNGSLSSQTAVPSSSHM) the composition is skewed to polar residues. Positions 435–451 (QLQNNQQGQPLQGPAQQ) are enriched in low complexity. Residues 575 to 595 (PTQGQPVQSSNPGAPNAIIPS) are compositionally biased toward polar residues. Positions 609 to 642 (VPLTCNWTEHTSPEGFKYYYNSITRESKWDKPEE) constitute a WW domain. Positions 670–738 (MQQLQSPPQA…QSAQERAWKS (69 aa)) are disordered. Residues 683 to 706 (PAMQPVQQIPQAQQGQQQMQMKQQ) are compositionally biased toward low complexity. Residues 723-732 (RIQQGIQSAQ) show a composition bias toward polar residues.

In terms of assembly, interacts with FY. Binds to SF1, FIK, RPRD1B, OsI_31983 and MADS8.

It is found in the nucleus. Its function is as follows. Plays a major role in the promotion of the transition of the vegetative meristem to reproductive development. Required for RNA-mediated chromatin silencing of a range of loci in the genome. Cotranscriptionally recognizes aberrant RNA and marks it for silencing. Controls alternative cleavage and polyadenylation on pre-mRNAs and antisense RNAs. Regulates flowering time, seed size and cell volume, probably via the modulation of cell size. In Oryza sativa subsp. indica (Rice), this protein is Flowering time control protein FCA.